A 348-amino-acid chain; its full sequence is Zinc finger protein 843 (348 aa).

The segment at 33 to 55 (CKCKACGRGFTQSASLLQHWRVH) adopts a C2H2-type 1 zinc-finger fold. Residues 145-167 (FCCCSCGDSVNEKTSLSQRVLPH) form a C2H2-type 2; degenerate zinc finger. The span at 184–195 (APSSVAPDSTSG) shows a compositional bias: polar residues. Disordered stretches follow at residues 184–203 (APSS…GSPG) and 256–329 (ATQP…WRGA).

The polypeptide is Zinc finger protein 843 (ZNF843) (Homo sapiens (Human)).